A 335-amino-acid polypeptide reads, in one-letter code: Mitochondrial uncoupling protein 4C (335 aa).

Solcar repeat units lie at residues 34-125 (RNLF…FRRP), 137-229 (LKIY…SKRT), and 238-329 (EGLP…LRQW). 6 helical membrane-spanning segments follow: residues 40-57 (YVNT…VFPL), 100-118 (GFSA…RVVL), 138-157 (KIYM…QALA), 204-223 (GVGP…VGSY), 244-264 (FVSS…ADVI), and 304-323 (GLMP…WLSV).

This sequence belongs to the mitochondrial carrier (TC 2.A.29) family.

The protein localises to the mitochondrion inner membrane. In terms of biological role, mitochondrial protein that is likely to be responsible for thermogenic respiration. Likely to function in mitochondrial uncoupling i.e. creating mitochondrial proton leaks across the inner mitochondrial membrane and can therefore dissipate the mitochondrial proton gradient and convert the energy of substrate oxidation into heat instead of ATP. Involved in cold tolerance, it is required for development to the adult stage at low temperatures. This chain is Mitochondrial uncoupling protein 4C, found in Drosophila melanogaster (Fruit fly).